The following is a 101-amino-acid chain: Kunitz-type anticoagulant protein HA11 (101 aa).

Residues 1 to 23 (MKTYLILATLALIFSAMLTNICA) form the signal peptide. A BPTI/Kunitz inhibitor domain is found at 32–88 (CTEAPGDGKCPGEVRPAISTANWTFSKSFGGCVAHRWGSCGNHSNVFPKCLSCMTTC). Cystine bridges form between Cys-32/Cys-88, Cys-41/Cys-71, and Cys-63/Cys-84. N-linked (GlcNAc...) asparagine glycans are attached at residues Asn-53, Asn-73, and Asn-92.

In terms of tissue distribution, expressed in female salivary gland and ovary.

The protein resides in the secreted. Anticoagulant protein that modulates blood feeding of ticks on vertebrate species. Delays normal clotting of host plasma. The chain is Kunitz-type anticoagulant protein HA11 from Hyalomma asiaticum (Tick).